The chain runs to 501 residues: Aspartate--tRNA ligase, cytoplasmic (501 aa).

Thr-52 is modified (phosphothreonine). The residue at position 74 (Lys-74) is an N6-acetyllysine. Glu-229 serves as a coordination point for L-aspartate. Phosphoserine is present on Ser-249. An aspartate region spans residues 251–254; that stretch reads QLYK. L-aspartate is bound at residue Arg-273. ATP contacts are provided by residues 273–275 and 281–283; these read RAE and RHL. Residue Lys-374 is modified to N6-acetyllysine. Glu-424 provides a ligand contact to ATP. L-aspartate contacts are provided by Ser-427 and Arg-431. ATP is bound at residue 472-475; the sequence is GLER.

This sequence belongs to the class-II aminoacyl-tRNA synthetase family. Type 2 subfamily. Homodimer. Part of a multisubunit complex that groups tRNA ligases for Arg (RARS1), Asp (DARS1), Gln (QARS1), Ile (IARS1), Leu (LARS1), Lys (KARS1), Met (MARS1) the bifunctional ligase for Glu and Pro (EPRS1) and the auxiliary subunits AIMP1/p43, AIMP2/p38 and EEF1E1/p18.

It localises to the cytoplasm. It catalyses the reaction tRNA(Asp) + L-aspartate + ATP = L-aspartyl-tRNA(Asp) + AMP + diphosphate. Its function is as follows. Catalyzes the specific attachment of an amino acid to its cognate tRNA in a 2 step reaction: the amino acid (AA) is first activated by ATP to form AA-AMP and then transferred to the acceptor end of the tRNA. The chain is Aspartate--tRNA ligase, cytoplasmic (Dars1) from Mus musculus (Mouse).